The chain runs to 37 residues: Large ribosomal subunit protein bL36 (37 aa).

It belongs to the bacterial ribosomal protein bL36 family.

In Mycoplasma pneumoniae (strain ATCC 29342 / M129 / Subtype 1) (Mycoplasmoides pneumoniae), this protein is Large ribosomal subunit protein bL36.